We begin with the raw amino-acid sequence, 174 residues long: tRNA (cytidine(56)-2'-O)-methyltransferase (174 aa).

Residues Leu83, 108 to 112, and 126 to 133 contribute to the S-adenosyl-L-methionine site; these read GAEKV and VGNQPHSE.

This sequence belongs to the aTrm56 family. In terms of assembly, homodimer.

The protein localises to the cytoplasm. It carries out the reaction cytidine(56) in tRNA + S-adenosyl-L-methionine = 2'-O-methylcytidine(56) in tRNA + S-adenosyl-L-homocysteine + H(+). Functionally, specifically catalyzes the AdoMet-dependent 2'-O-ribose methylation of cytidine at position 56 in tRNAs. The chain is tRNA (cytidine(56)-2'-O)-methyltransferase from Methanothrix thermoacetophila (strain DSM 6194 / JCM 14653 / NBRC 101360 / PT) (Methanosaeta thermophila).